We begin with the raw amino-acid sequence, 831 residues long: Glucan 1,3-beta-glucosidase D (831 aa).

Positions 1–21 (MPSQSRSRDRYGRDSDRDRSR) are enriched in basic and acidic residues. 2 disordered regions span residues 1-246 (MPSQ…RGQS) and 261-288 (APDMEVRLRGGGRGPPRERRWEKDSDGS). Residues 1-300 (MPSQSRSRDR…LTPFWKRKKW (300 aa)) lie on the Cytoplasmic side of the membrane. The span at 32–41 (EDDDDDDDFD) shows a compositional bias: acidic residues. Composition is skewed to basic and acidic residues over residues 42-70 (DNPRDRRYRRDGYRRAPVDSRAYDSHDDY), 78-94 (EPRRYRSDTERRRERAR), and 151-177 (DAARRLRRRERERERERRAETSKHKST). Low complexity predominate over residues 178–195 (DSSNSSAGLLNANALAKL). 2 stretches are compositionally biased toward basic and acidic residues: residues 197-216 (AQHEELDRQEQRRAEKEAKA) and 275-286 (PPRERRWEKDSD). The chain crosses the membrane as a helical; Signal-anchor for type II membrane protein span at residues 301–321 (WWIGAIVLVIVVIIIVVAVVV). The Extracellular segment spans residues 322-831 (SNNKKSDSDS…PSFGNLPEYY (510 aa)). Residues 325–360 (KKSDSDSDSDSNSGSSDSWGGDKSSLNGLDHDSIPK) form a disordered region. Positions 334–350 (DSNSGSSDSWGGDKSSL) are enriched in low complexity. N-linked (GlcNAc...) asparagine glycans are attached at residues N379, N396, and N547. Catalysis depends on E598, which acts as the Proton donor. N-linked (GlcNAc...) asparagine glycans are attached at residues N611, N637, N670, and N690. Residue E703 is the Nucleophile of the active site.

It belongs to the glycosyl hydrolase 5 (cellulase A) family.

Its subcellular location is the cell membrane. It carries out the reaction Successive hydrolysis of beta-D-glucose units from the non-reducing ends of (1-&gt;3)-beta-D-glucans, releasing alpha-glucose.. Its function is as follows. Glucosidase involved in the degradation of cellulosic biomass. Active on lichenan. This is Glucan 1,3-beta-glucosidase D (exgD) from Emericella nidulans (strain FGSC A4 / ATCC 38163 / CBS 112.46 / NRRL 194 / M139) (Aspergillus nidulans).